We begin with the raw amino-acid sequence, 683 residues long: Transforming growth factor-beta-induced protein ig-h3 (683 aa).

The first 23 residues, 1–23 (MALLGRLLPLALALALGPAATHA), serve as a signal peptide directing secretion. Position 37 is a phosphoserine (Ser37). The region spanning 45 to 99 (GPNVCAVQKLIGTNKKYFTNCKQWYQRKICGKSTVISYECCPGYEKVPGEKGCPA) is the EMI domain. 5 disulfides stabilise this stretch: Cys49–Cys85, Cys74–Cys339, Cys84–Cys97, Cys214–Cys317, and Cys473–Cys478. The residue at position 65 (Cys65) is an S-cysteinyl cysteine. FAS1 domains are found at residues 103–236 (LSNL…DKVI), 240–371 (TNNI…DELL), 375–498 (SAKT…DRML), and 502–632 (MGTV…NTVL). The short motif at 642 to 644 (RGD) is the Cell attachment site element.

As to quaternary structure, binds to type I, II, and IV collagens. Gamma-carboxyglutamated; gamma-carboxyglutamate residues are formed by vitamin K dependent carboxylation; these residues may be required for binding to calcium. According to a report, does not contain any vitamin K-dependent gamma-carboxyglutamate residues. Post-translationally, the EMI domain contains 2 expected intradomain disulfide bridges (Cys-49-Cys85 and Cys-84-Cys-97) and one unusual interdomain disulfide bridge to the second FAS1 domain (Cys-74-Cys-339). This arrangement violates the predicted disulfide bridge pattern of an EMI domain. In terms of tissue distribution, widely distributed in various tissues except for the brain. High levels in corneal epithelium.

The protein resides in the secreted. Its subcellular location is the extracellular space. The protein localises to the extracellular matrix. Plays a role in cell adhesion. May play a role in cell-collagen interactions. The protein is Transforming growth factor-beta-induced protein ig-h3 (TGFBI) of Sus scrofa (Pig).